Here is a 259-residue protein sequence, read N- to C-terminus: Phosphatidylserine decarboxylase proenzyme (259 aa).

Residues Asp-86, His-142, and Ser-226 each act as charge relay system; for autoendoproteolytic cleavage activity in the active site. The Schiff-base intermediate with substrate; via pyruvic acid; for decarboxylase activity role is filled by Ser-226. Pyruvic acid (Ser); by autocatalysis is present on Ser-226.

This sequence belongs to the phosphatidylserine decarboxylase family. PSD-B subfamily. Prokaryotic type I sub-subfamily. In terms of assembly, heterodimer of a large membrane-associated beta subunit and a small pyruvoyl-containing alpha subunit. It depends on pyruvate as a cofactor. Post-translationally, is synthesized initially as an inactive proenzyme. Formation of the active enzyme involves a self-maturation process in which the active site pyruvoyl group is generated from an internal serine residue via an autocatalytic post-translational modification. Two non-identical subunits are generated from the proenzyme in this reaction, and the pyruvate is formed at the N-terminus of the alpha chain, which is derived from the carboxyl end of the proenzyme. The autoendoproteolytic cleavage occurs by a canonical serine protease mechanism, in which the side chain hydroxyl group of the serine supplies its oxygen atom to form the C-terminus of the beta chain, while the remainder of the serine residue undergoes an oxidative deamination to produce ammonia and the pyruvoyl prosthetic group on the alpha chain. During this reaction, the Ser that is part of the protease active site of the proenzyme becomes the pyruvoyl prosthetic group, which constitutes an essential element of the active site of the mature decarboxylase.

It localises to the cell membrane. It carries out the reaction a 1,2-diacyl-sn-glycero-3-phospho-L-serine + H(+) = a 1,2-diacyl-sn-glycero-3-phosphoethanolamine + CO2. Its pathway is phospholipid metabolism; phosphatidylethanolamine biosynthesis; phosphatidylethanolamine from CDP-diacylglycerol: step 2/2. In terms of biological role, catalyzes the formation of phosphatidylethanolamine (PtdEtn) from phosphatidylserine (PtdSer). The protein is Phosphatidylserine decarboxylase proenzyme of Halalkalibacterium halodurans (strain ATCC BAA-125 / DSM 18197 / FERM 7344 / JCM 9153 / C-125) (Bacillus halodurans).